A 101-amino-acid chain; its full sequence is Apolipoprotein C-II (101 aa).

The N-terminal stretch at 1–22 is a signal peptide; it reads MGTRFLLALFLVLLVLGLEVQA. The lipid binding stretch occupies residues 66-74; it reads AVDERIRDM. The lipoprotein lipase cofactor stretch occupies residues 78–101; it reads STAAVTTYAGIFTDQLFSMLKGEQ.

This sequence belongs to the apolipoprotein C2 family. In terms of processing, proapolipoprotein C-II is synthesized as a sialic acid containing glycoprotein which is subsequently desialylated prior to its proteolytic processing. Proapolipoprotein C-II, the major form found in plasma undergoes proteolytic cleavage of its N-terminal hexapeptide to generate apolipoprotein C-II, which occurs as the minor form in plasma.

The protein localises to the secreted. In terms of biological role, component of chylomicrons, very low-density lipoproteins (VLDL), low-density lipoproteins (LDL), and high-density lipoproteins (HDL) in plasma. Plays an important role in lipoprotein metabolism as an activator of lipoprotein lipase. Both proapolipoprotein C-II and apolipoprotein C-II can activate lipoprotein lipase. The polypeptide is Apolipoprotein C-II (APOC2) (Tupaia glis (Common tree shrew)).